Here is a 173-residue protein sequence, read N- to C-terminus: Protein-export protein SecB (173 aa).

The segment at 148 to 173 is disordered; that stretch reads QQQKQRREQGTSDSAPSGSPDNGGRQ. Polar residues predominate over residues 158 to 167; it reads TSDSAPSGSP.

This sequence belongs to the SecB family. Homotetramer, a dimer of dimers. One homotetramer interacts with 1 SecA dimer.

The protein resides in the cytoplasm. Functionally, one of the proteins required for the normal export of preproteins out of the cell cytoplasm. It is a molecular chaperone that binds to a subset of precursor proteins, maintaining them in a translocation-competent state. It also specifically binds to its receptor SecA. The sequence is that of Protein-export protein SecB from Halorhodospira halophila (strain DSM 244 / SL1) (Ectothiorhodospira halophila (strain DSM 244 / SL1)).